A 464-amino-acid chain; its full sequence is Probable pectin lyase F (464 aa).

Residues 1–20 (MAIIRSVIAATALLGAAVNA) form the signal peptide. A disulfide bridge connects residues Cys80 and Cys103. The N-linked (GlcNAc...) asparagine glycan is linked to Asn126. Residue Arg252 is part of the active site. Cys319 and Cys327 are joined by a disulfide. Positions 424 to 464 (EHEVSTPAVPTPTPVPSSVGSHGSTAGSSHPPAFSRTSFES) are disordered. Low complexity predominate over residues 439–448 (PSSVGSHGST).

This sequence belongs to the polysaccharide lyase 1 family.

The protein localises to the secreted. It carries out the reaction Eliminative cleavage of (1-&gt;4)-alpha-D-galacturonan methyl ester to give oligosaccharides with 4-deoxy-6-O-methyl-alpha-D-galact-4-enuronosyl groups at their non-reducing ends.. Pectinolytic enzymes consist of four classes of enzymes: pectin lyase, polygalacturonase, pectin methylesterase and rhamnogalacturonase. Among pectinolytic enzymes, pectin lyase is the most important in depolymerization of pectin, since it cleaves internal glycosidic bonds of highly methylated pectins. This chain is Probable pectin lyase F (pelF), found in Emericella nidulans (strain FGSC A4 / ATCC 38163 / CBS 112.46 / NRRL 194 / M139) (Aspergillus nidulans).